Here is a 719-residue protein sequence, read N- to C-terminus: Putative ankyrin repeat protein RBE_0319 (719 aa).

ANK repeat units lie at residues 377 to 406 (VAEELLFTATYYQNINIIKQIIETKIEISS), 408 to 438 (TLIKALYINFTSDNKEILDYLLSFKGLNINE), 442 to 472 (NGGTLLDYAITFNKLDIVKKLLSHENIEVNK), 476 to 506 (YGFTILEQAINDDKLEIVKLLLSCKSLEINQ), 510 to 540 (YQTTPLQQAINGDKLEIVKLLLSHPDIKFNE), 544 to 572 (LGYTSLDWVIICNKLEIFKVLMPHLDINQ), 576 to 605 (DGYTPLEWSIYNSYEVFQTLLLRPDINVNE), 609 to 639 (HGLTPLQLAIIDHNDQMIQALLSHKNIEVSE), and 642 to 672 (QYGTPLELVINNSNDTALKLLLSHPKINLNK).

In Rickettsia bellii (strain RML369-C), this protein is Putative ankyrin repeat protein RBE_0319.